We begin with the raw amino-acid sequence, 318 residues long: Protein-L-histidine N-pros-methyltransferase (318 aa).

The N-terminal stretch at Met-1 to Ala-18 is a signal peptide. The N-linked (GlcNAc...) asparagine glycan is linked to Asn-35. Positions 174, 210, and 295 each coordinate S-adenosyl-L-homocysteine.

The protein belongs to the METTL9 family.

It localises to the endoplasmic reticulum. The protein localises to the mitochondrion. The enzyme catalyses L-histidyl-[protein] + S-adenosyl-L-methionine = N(pros)-methyl-L-histidyl-[protein] + S-adenosyl-L-homocysteine + H(+). Its function is as follows. Protein-histidine N-methyltransferase that specifically catalyzes 1-methylhistidine (pros-methylhistidine) methylation of target proteins. Specifically methylates the second His of proteins with a His-x-His (HxH) motif (where 'x' is preferably a small amino acid), while exploiting the first one as a recognition signature. Catalyzes methylation of target proteins such as S100A9, NDUFB3, SLC39A5, SLC39A7, ARMC6 and DNAJB12; 1-methylhistidine modification may affect the binding of zinc and other metals to its target proteins. Constitutes the main methyltransferase for the 1-methylhistidine modification in cell. The sequence is that of Protein-L-histidine N-pros-methyltransferase from Bos taurus (Bovine).